Here is a 223-residue protein sequence, read N- to C-terminus: UPF0502 protein Sbal223_2520 (223 aa).

Belongs to the UPF0502 family.

This chain is UPF0502 protein Sbal223_2520, found in Shewanella baltica (strain OS223).